We begin with the raw amino-acid sequence, 269 residues long: 4-hydroxy-tetrahydrodipicolinate reductase (269 aa).

NAD(+) contacts are provided by residues G8–M13 and E34. R35 provides a ligand contact to NADP(+). NAD(+) is bound by residues G98–T100 and A122–Y125. Residue H155 is the Proton donor/acceptor of the active site. H156 contacts (S)-2,3,4,5-tetrahydrodipicolinate. Residue K159 is the Proton donor of the active site. G165–T166 provides a ligand contact to (S)-2,3,4,5-tetrahydrodipicolinate.

It belongs to the DapB family.

The protein resides in the cytoplasm. It carries out the reaction (S)-2,3,4,5-tetrahydrodipicolinate + NAD(+) + H2O = (2S,4S)-4-hydroxy-2,3,4,5-tetrahydrodipicolinate + NADH + H(+). The enzyme catalyses (S)-2,3,4,5-tetrahydrodipicolinate + NADP(+) + H2O = (2S,4S)-4-hydroxy-2,3,4,5-tetrahydrodipicolinate + NADPH + H(+). It functions in the pathway amino-acid biosynthesis; L-lysine biosynthesis via DAP pathway; (S)-tetrahydrodipicolinate from L-aspartate: step 4/4. Its function is as follows. Catalyzes the conversion of 4-hydroxy-tetrahydrodipicolinate (HTPA) to tetrahydrodipicolinate. In Vibrio parahaemolyticus serotype O3:K6 (strain RIMD 2210633), this protein is 4-hydroxy-tetrahydrodipicolinate reductase.